Here is a 1088-residue protein sequence, read N- to C-terminus: Sterol regulatory element-binding protein 2 (1088 aa).

The interval 1–38 (METLTELGDELTLGDIDEMLQFVSNQVGEFPDLFEEQL) is transcriptional activation (acidic). Residues 1–440 (METLTELGDE…TGLGMMDRSR (440 aa)) are Cytoplasmic-facing. Residues 59–70 (AAQQPYTTSAPQ) are compositionally biased toward polar residues. Positions 59–87 (AAQQPYTTSAPQPQLLPVKAPPQATPQRT) are disordered. Residues 290 to 340 (ERRTTHNIIEKRYRSSINDKIMELKDLVMGTDAKMHKSGVLKKAIDYIKYL) form the bHLH domain. Positions 340–361 (LQQVNQKLRQENMALKLANQKN) are leucine-zipper. Residues 392–431 (SPPASDSGSPAVFSPYSVDSEPGSPLLDDEKVKDEPDSPT) are disordered. The helical transmembrane segment at 441-461 (MLLCTMTFLCLSFNPLTSLLH) threads the bilayer. Residues 462–494 (PESGQYSERAVQHGTGRTMLGVEMSGFYGSWFD) lie on the Lumenal side of the membrane. The chain crosses the membrane as a helical span at residues 495–515 (WLIPTIILWLVNGVIVLSVFM). Residues 516–1088 (KLLIHGEPVT…LSGGTAMAAS (573 aa)) lie on the Cytoplasmic side of the membrane.

The protein belongs to the SREBP family. In terms of assembly, forms a tight complex with scap, the SCAP-SREBP complex, in the endoplasmic reticulum membrane. Homodimer; efficient DNA binding of the soluble transcription factor fragment requires dimerization with another bHLH protein. In terms of processing, processed in the Golgi apparatus, releasing the protein from the membrane. At low cholesterol the SCAP-SREBP complex is recruited into COPII vesicles for export from the endoplasmic reticulum. In the Golgi, complex SREBPs are cleaved sequentially by site-1 (MBTPS1, S1P) and site-2 (MBTPS2, S2P) proteases. The first cleavage by site-1 protease occurs within the luminal loop, the second cleavage by site-2 protease occurs within the first transmembrane domain, releasing the transcription factor from the Golgi membrane.

Its subcellular location is the endoplasmic reticulum membrane. It is found in the golgi apparatus membrane. It localises to the cytoplasmic vesicle. The protein resides in the COPII-coated vesicle membrane. The protein localises to the nucleus. Functionally, precursor of the transcription factor form (Processed sterol regulatory element-binding protein 2), which is embedded in the endoplasmic reticulum membrane. Low sterol concentrations promote processing of this form, releasing the transcription factor form that translocates into the nucleus and activates transcription of genes involved in cholesterol biosynthesis. Key transcription factor that regulates expression of genes involved in cholesterol biosynthesis. Binds to the sterol regulatory element 1 (SRE-1) (5'-ATCACCCCAC-3'). Has dual sequence specificity binding to both an E-box motif (5'-ATCACGTGA-3') and to SRE-1 (5'-ATCACCCCAC-3'). Regulates transcription of genes related to cholesterol synthesis pathway. This Xenopus laevis (African clawed frog) protein is Sterol regulatory element-binding protein 2.